Here is a 476-residue protein sequence, read N- to C-terminus: Adenosylhomocysteinase (476 aa).

Substrate-binding residues include threonine 67, aspartate 142, and glutamate 202. 203 to 205 is a binding site for NAD(+); that stretch reads TTT. 2 residues coordinate substrate: lysine 232 and aspartate 236. NAD(+) contacts are provided by residues asparagine 237, 266-271, glutamate 289, asparagine 324, 345-347, and asparagine 390; these read GYGDVG and IGH.

The protein belongs to the adenosylhomocysteinase family. NAD(+) serves as cofactor.

Its subcellular location is the cytoplasm. The enzyme catalyses S-adenosyl-L-homocysteine + H2O = L-homocysteine + adenosine. Its pathway is amino-acid biosynthesis; L-homocysteine biosynthesis; L-homocysteine from S-adenosyl-L-homocysteine: step 1/1. Its function is as follows. May play a key role in the regulation of the intracellular concentration of adenosylhomocysteine. The polypeptide is Adenosylhomocysteinase (Synechococcus sp. (strain CC9605)).